Consider the following 176-residue polypeptide: Negative modulator of initiation of replication (176 aa).

The protein belongs to the SeqA family. In terms of assembly, homodimer. Polymerizes to form helical filaments.

The protein resides in the cytoplasm. Negative regulator of replication initiation, which contributes to regulation of DNA replication and ensures that replication initiation occurs exactly once per chromosome per cell cycle. Binds to pairs of hemimethylated GATC sequences in the oriC region, thus preventing assembly of replication proteins and re-initiation at newly replicated origins. Repression is relieved when the region becomes fully methylated. This Hamiltonella defensa subsp. Acyrthosiphon pisum (strain 5AT) protein is Negative modulator of initiation of replication.